The sequence spans 439 residues: Ribosomal protein uS12 methylthiotransferase RimO (439 aa).

One can recognise an MTTase N-terminal domain in the interval 7–119 (KQLCLISLGC…IDIMIAKKQN (113 aa)). [4Fe-4S] cluster contacts are provided by Cys16, Cys50, Cys82, Cys151, Cys155, and Cys158. The region spanning 137-368 (TGSSVHAYVK…ALKHQNHSFK (232 aa)) is the Radical SAM core domain.

It belongs to the methylthiotransferase family. RimO subfamily. It depends on [4Fe-4S] cluster as a cofactor.

The protein resides in the cytoplasm. It catalyses the reaction L-aspartate(89)-[ribosomal protein uS12]-hydrogen + (sulfur carrier)-SH + AH2 + 2 S-adenosyl-L-methionine = 3-methylsulfanyl-L-aspartate(89)-[ribosomal protein uS12]-hydrogen + (sulfur carrier)-H + 5'-deoxyadenosine + L-methionine + A + S-adenosyl-L-homocysteine + 2 H(+). In terms of biological role, catalyzes the methylthiolation of an aspartic acid residue of ribosomal protein uS12. The polypeptide is Ribosomal protein uS12 methylthiotransferase RimO (Helicobacter pylori (strain ATCC 700392 / 26695) (Campylobacter pylori)).